The sequence spans 1029 residues: uncharacterized protein (1029 aa).

Basic and acidic residues predominate over residues 1 to 23 (MREWCMLRESRTNTPRRAAERGK). The disordered stretch occupies residues 1 to 31 (MREWCMLRESRTNTPRRAAERGKRPGGSSVR). The 130-residue stretch at 39–168 (TALCYDLVGS…AALAMAARLQ (130 aa)) folds into the Guanylate cyclase domain. 261-268 (GDAGIGKS) contributes to the ATP binding site.

This is an uncharacterized protein from Rhizobium meliloti (strain 1021) (Ensifer meliloti).